Here is a 206-residue protein sequence, read N- to C-terminus: Large ribosomal subunit protein uL4 (206 aa).

The interval Asn-47 to Asp-94 is disordered. The span at Ala-49 to Lys-58 shows a compositional bias: basic and acidic residues. Residues Ser-59 to Ala-74 show a composition bias toward basic residues.

It belongs to the universal ribosomal protein uL4 family. As to quaternary structure, part of the 50S ribosomal subunit.

One of the primary rRNA binding proteins, this protein initially binds near the 5'-end of the 23S rRNA. It is important during the early stages of 50S assembly. It makes multiple contacts with different domains of the 23S rRNA in the assembled 50S subunit and ribosome. Its function is as follows. Forms part of the polypeptide exit tunnel. The sequence is that of Large ribosomal subunit protein uL4 from Laribacter hongkongensis (strain HLHK9).